Here is a 342-residue protein sequence, read N- to C-terminus: N-acetyl-gamma-glutamyl-phosphate reductase (342 aa).

The active site involves Cys147.

The protein belongs to the NAGSA dehydrogenase family. Type 1 subfamily.

Its subcellular location is the cytoplasm. It catalyses the reaction N-acetyl-L-glutamate 5-semialdehyde + phosphate + NADP(+) = N-acetyl-L-glutamyl 5-phosphate + NADPH + H(+). It functions in the pathway amino-acid biosynthesis; L-arginine biosynthesis; N(2)-acetyl-L-ornithine from L-glutamate: step 3/4. In terms of biological role, catalyzes the NADPH-dependent reduction of N-acetyl-5-glutamyl phosphate to yield N-acetyl-L-glutamate 5-semialdehyde. The chain is N-acetyl-gamma-glutamyl-phosphate reductase from Campylobacter jejuni subsp. doylei (strain ATCC BAA-1458 / RM4099 / 269.97).